Here is a 108-residue protein sequence, read N- to C-terminus: Large ribosomal subunit protein uL24 (108 aa).

It belongs to the universal ribosomal protein uL24 family. As to quaternary structure, part of the 50S ribosomal subunit.

In terms of biological role, one of two assembly initiator proteins, it binds directly to the 5'-end of the 23S rRNA, where it nucleates assembly of the 50S subunit. One of the proteins that surrounds the polypeptide exit tunnel on the outside of the subunit. This is Large ribosomal subunit protein uL24 from Citrifermentans bemidjiense (strain ATCC BAA-1014 / DSM 16622 / JCM 12645 / Bem) (Geobacter bemidjiensis).